The following is a 226-amino-acid chain: ATP synthase F(0) complex subunit a (226 aa).

6 helical membrane-spanning segments follow: residues 6–26, 68–88, 97–117, 138–158, 164–184, and 193–213; these read FATF…IMLF, WALM…LGLL, QLSM…LMGF, VPML…ALAV, ITAG…LCSI, and FIIL…QAYV.

The protein belongs to the ATPase A chain family. Component of the ATP synthase complex composed at least of ATP5F1A/subunit alpha, ATP5F1B/subunit beta, ATP5MC1/subunit c (homooctomer), MT-ATP6/subunit a, MT-ATP8/subunit 8, ATP5ME/subunit e, ATP5MF/subunit f, ATP5MG/subunit g, ATP5MK/subunit k, ATP5MJ/subunit j, ATP5F1C/subunit gamma, ATP5F1D/subunit delta, ATP5F1E/subunit epsilon, ATP5PF/subunit F6, ATP5PB/subunit b, ATP5PD/subunit d, ATP5PO/subunit OSCP. ATP synthase complex consists of a soluble F(1) head domain (subunits alpha(3) and beta(3)) - the catalytic core - and a membrane F(0) domain - the membrane proton channel (subunits c, a, 8, e, f, g, k and j). These two domains are linked by a central stalk (subunits gamma, delta, and epsilon) rotating inside the F1 region and a stationary peripheral stalk (subunits F6, b, d, and OSCP). Interacts with DNAJC30; interaction is direct.

It is found in the mitochondrion inner membrane. The enzyme catalyses H(+)(in) = H(+)(out). In terms of biological role, subunit a, of the mitochondrial membrane ATP synthase complex (F(1)F(0) ATP synthase or Complex V) that produces ATP from ADP in the presence of a proton gradient across the membrane which is generated by electron transport complexes of the respiratory chain. ATP synthase complex consist of a soluble F(1) head domain - the catalytic core - and a membrane F(1) domain - the membrane proton channel. These two domains are linked by a central stalk rotating inside the F(1) region and a stationary peripheral stalk. During catalysis, ATP synthesis in the catalytic domain of F(1) is coupled via a rotary mechanism of the central stalk subunits to proton translocation. With the subunit c (ATP5MC1), forms the proton-conducting channel in the F(0) domain, that contains two crucial half-channels (inlet and outlet) that facilitate proton movement from the mitochondrial intermembrane space (IMS) into the matrix. Protons are taken up via the inlet half-channel and released through the outlet half-channel, following a Grotthuss mechanism. This is ATP synthase F(0) complex subunit a from Osphranter robustus (Wallaroo).